A 287-amino-acid chain; its full sequence is ATP synthase gamma chain (287 aa).

Belongs to the ATPase gamma chain family. As to quaternary structure, F-type ATPases have 2 components, CF(1) - the catalytic core - and CF(0) - the membrane proton channel. CF(1) has five subunits: alpha(3), beta(3), gamma(1), delta(1), epsilon(1). CF(0) has three main subunits: a, b and c.

It localises to the cell inner membrane. In terms of biological role, produces ATP from ADP in the presence of a proton gradient across the membrane. The gamma chain is believed to be important in regulating ATPase activity and the flow of protons through the CF(0) complex. The polypeptide is ATP synthase gamma chain (Stenotrophomonas maltophilia (strain R551-3)).